A 265-amino-acid chain; its full sequence is MAPERLRSTILTKDGINWYYEQEGSGPDVVLIPDGLGDCQMFDKPMSIIGSSGFKVTTFDMPGMSRSSSAPPETYQDVTGQKLANYIVTVMDQLGIKTASVWGCSSGASTVLALCSGFPERVRNGMPHEVPTANPENLQNIHDADPATISRDMAAVSRAMSANEEAWDALGPEVHERLRDNYVRWAYGYPRTIPGSAATKTEDLHKVPIDWTVGAAGPTQVFFENVVIATRESIPIKTLPGFHFPYVSHPEAFAKYVVETTRKYL.

Zearalenone contacts are provided by Gly-35, Ser-105, and Ser-106. Residue Ser-105 is part of the active site. The active site involves Glu-129. Residues Trp-185, Tyr-189, and His-243 each coordinate zearalenone. His-243 is an active-site residue.

The protein belongs to the AB hydrolase superfamily. Hydrolase RutD family. As to quaternary structure, homodimer.

It carries out the reaction zearalenone + H2O = hydrolyzed zearalenone + H(+). Its function is as follows. Lactonohydrolase that specifically hydrolyzes zearalenone (ZEN), an oestrogenic mycotoxin produced by numerous Fusarium specie, into a non-toxic alkylresorcinol product. The chain is Zearalenone hydrolase from Cladophialophora bantiana (strain ATCC 10958 / CDC1940 / 8579 / CBS 173.52) (Xylohypha bantiana).